The following is a 196-amino-acid chain: Protein LURP-one-related 8 (196 aa).

Belongs to the LOR family.

In terms of biological role, might be related to the phospholipid scramblase and tubby-like superfamily of membrane tethered transcription factors. The sequence is that of Protein LURP-one-related 8 from Arabidopsis thaliana (Mouse-ear cress).